A 424-amino-acid polypeptide reads, in one-letter code: 3-ketoacyl-CoA thiolase B, peroxisomal (424 aa).

The N-terminal 26 residues, 1-26 (MHRLQVVLGHLAGRSESSSALQAAPC), are a transit peptide targeting the peroxisome. The PTS2-type peroxisomal targeting signal stretch occupies residues 1–26 (MHRLQVVLGHLAGRSESSSALQAAPC). The Acyl-thioester intermediate role is filled by Cys-123. Residues Lys-173 and Lys-234 each carry the N6-acetyllysine modification. CoA is bound by residues Arg-249, Thr-252, and Ser-276. The active-site Proton donor/acceptor is the Cys-408.

This sequence belongs to the thiolase-like superfamily. Thiolase family. In terms of assembly, homodimer. Interacts (via PTS2-type peroxisomal targeting signal region) with PEX7; leading to its translocation into peroxisomes.

Its subcellular location is the peroxisome. The catalysed reaction is an acyl-CoA + acetyl-CoA = a 3-oxoacyl-CoA + CoA. The enzyme catalyses 2 acetyl-CoA = acetoacetyl-CoA + CoA. It catalyses the reaction hexanoyl-CoA + acetyl-CoA = 3-oxooctanoyl-CoA + CoA. It carries out the reaction tetradecanoyl-CoA + acetyl-CoA = 3-oxohexadecanoyl-CoA + CoA. The catalysed reaction is 3-oxohexadecanedioyl-CoA + CoA = tetradecanedioyl-CoA + acetyl-CoA. The enzyme catalyses 3-oxo-(6Z,9Z,12Z,15Z,18Z,21Z)-tetracosahexaenoyl-CoA + CoA = (4Z,7Z,10Z,13Z,16Z,19Z)-docosahexaenoyl-CoA + acetyl-CoA. The protein operates within lipid metabolism; peroxisomal fatty acid beta-oxidation. Its function is as follows. Responsible for the thiolytic cleavage of straight chain 3-keto fatty acyl-CoAs (3-oxoacyl-CoAs). Plays an important role in fatty acid peroxisomal beta-oxidation. Catalyzes the cleavage of short, medium, long, and very long straight chain 3-oxoacyl-CoAs. Medium chain straight 3-oxoacyl-CoAs are preferred substrates. The protein is 3-ketoacyl-CoA thiolase B, peroxisomal of Rattus norvegicus (Rat).